A 443-amino-acid chain; its full sequence is MSKTYHFIGIKGSGMSALALMLHQMGHNVQGSDVDKYYFTQRGLEQAGVTILPFSPNNISEDLEIIAGNAFRPDNNEELAYVIEKGYHFKRYHEFLGDFMRQFTSLGVAGAHGKTSTTGLLAHVLKNITDTSFLIGDGTGRGSANANYFVFEADEYERHFMPYHPEYSIITNIDFDHPDYFTGLEDVFNAFNDYAKQVQKGLFIYGEDPKLHEITSEAPIYYYGFEDSNDFIAKDITRTVNGSDFKVFYNQEEIGQFHVPAYGKHNILNATAVIANLYIMGIDMALVAEHLKTFSGVKRRFTEKIIDDTVIIDDFAHHPTEIIATLDAARQKYPSKEIVAIFQPHTFTRTIALLDEFAHALSQADSVYLAQIYGSAREVDNGEVKVEDLAAKIVKHSDLVTVENVSPLLNHDNAVYVFMGAGDIQLYERSFEELLANLTKNTQ.

ATP is bound at residue 110-116; sequence GAHGKTS.

The protein belongs to the MurCDEF family.

The protein localises to the cytoplasm. It catalyses the reaction UDP-N-acetyl-alpha-D-muramate + L-alanine + ATP = UDP-N-acetyl-alpha-D-muramoyl-L-alanine + ADP + phosphate + H(+). It functions in the pathway cell wall biogenesis; peptidoglycan biosynthesis. Its function is as follows. Cell wall formation. This Streptococcus agalactiae serotype Ia (strain ATCC 27591 / A909 / CDC SS700) protein is UDP-N-acetylmuramate--L-alanine ligase.